A 238-amino-acid chain; its full sequence is MGRKWANIVAKKTAKDGANSKVYAKFGVEIYVAAKQGEPDPESNSALKFVLDRAKQAQVPKHVIDKAIDKAKGNTDETFVEGRYEGFGPNGSMIIVDTLTSNVNRTAANVRTAYGKNGGNMGASGSVSYLFDKKGVIVFAGDDADTVFEQLLEADVDVDDVEAEEGTITVYTAPTDLHKGIQALRDNGVEEFQVTELEMIPQSEVVLEGDDLETFEKLIDALESDDDVQKVYHNVADF.

It belongs to the TACO1 family. YeeN subfamily.

Its subcellular location is the cytoplasm. This is Probable transcriptional regulatory protein SAK_1658 from Streptococcus agalactiae serotype Ia (strain ATCC 27591 / A909 / CDC SS700).